Here is a 210-residue protein sequence, read N- to C-terminus: Redox-sensing transcriptional repressor Rex (210 aa).

Residues 15–54 constitute a DNA-binding region (H-T-H motif); that stretch reads LYYRIFKRFNTDGIEKASSKQIADALGIDSATVRRDFSYF. 89–94 is an NAD(+) binding site; the sequence is GCGNIG.

The protein belongs to the transcriptional regulatory Rex family. As to quaternary structure, homodimer.

Its subcellular location is the cytoplasm. Its function is as follows. Modulates transcription in response to changes in cellular NADH/NAD(+) redox state. The protein is Redox-sensing transcriptional repressor Rex of Streptococcus agalactiae serotype Ia (strain ATCC 27591 / A909 / CDC SS700).